The sequence spans 55 residues: Large ribosomal subunit protein bL33B (55 aa).

This sequence belongs to the bacterial ribosomal protein bL33 family.

The chain is Large ribosomal subunit protein bL33B from Salinispora arenicola (strain CNS-205).